A 138-amino-acid polypeptide reads, in one-letter code: Basic phospholipase A2 Pla2Vb (138 aa).

An N-terminal signal peptide occupies residues 1–16 (MRTLWIVAVWLMGVEG). 7 disulfides stabilise this stretch: Cys-42–Cys-131, Cys-44–Cys-60, Cys-59–Cys-111, Cys-65–Cys-138, Cys-66–Cys-104, Cys-73–Cys-97, and Cys-91–Cys-102. Tyr-43, Gly-45, and Gly-47 together coordinate Ca(2+). The active site involves His-63. Asp-64 contributes to the Ca(2+) binding site. Asp-105 is an active-site residue.

The protein belongs to the phospholipase A2 family. Group II subfamily. D49 sub-subfamily. Ca(2+) is required as a cofactor. As to expression, expressed by the venom gland.

It localises to the secreted. The enzyme catalyses a 1,2-diacyl-sn-glycero-3-phosphocholine + H2O = a 1-acyl-sn-glycero-3-phosphocholine + a fatty acid + H(+). In terms of biological role, snake venom phospholipase A2 (PLA2) that exhibits medium anticoagulant effects by binding to factor Xa (F10) and inhibiting the prothrombinase activity (IC(50) is 90 nM). PLA2 catalyzes the calcium-dependent hydrolysis of the 2-acyl groups in 3-sn-phosphoglycerides. The protein is Basic phospholipase A2 Pla2Vb of Vipera berus berus (Common viper).